The primary structure comprises 178 residues: Gamma-crystallin S (178 aa).

S2 bears the N-acetylserine mark. The segment at 2–5 is N-terminal arm; the sequence is SKSV. Beta/gamma crystallin 'Greek key' domains lie at 6–44 and 45–87; these read AKITFYDDKNFQGHHYECDSDCPDFHTYLSCCNSIRVTG and GAWV…KVIH. The tract at residues 88 to 93 is connecting peptide; that stretch reads LSSGGQ. 2 Beta/gamma crystallin 'Greek key' domains span residues 94 to 134 and 135 to 177; these read YKLQ…KVLD and GVWV…RRIM.

This sequence belongs to the beta/gamma-crystallin family. Monomer.

In terms of biological role, crystallins are the dominant structural components of the vertebrate eye lens. This chain is Gamma-crystallin S (CRYGS), found in Macropus fuliginosus (Western gray kangaroo).